The following is a 2193-amino-acid chain: MAICGIAVRLPGGISNDAQLWDFLLAKRDARSQVPGSRYNISGYHSDSGKHGTSKSKYGYFLDESVDLGTLDTSFFSFTKLELEYIDPCQRQLLEVVRECFESAGEVNYRGKDIGCFVGSFGDDWTENLTHDEQTSAKYPLMVGGDFATPNRVSYEYNLHGPSVSIRTACSSSLVALHSACLSIQNGDCSAAIVAGFNLILTPTMTMIMSSKGVLSADGSSKSFDADADGYGRGEAVNAVYIKPLHDAIRDGNPIRAVIRGTATNSDGKSAGFTVPSADAQEDVIRKAYKAAGISDLSQTAFVECHGTGTTVGDPIEVAAIANTFGGDMYIGSVKPNVGHSEGASGLTSLIKAVLAVENRTIPPNIKFNTPNPKIPFEAKKITVPVEATPWPWNRCVRASVNSFGMGGVNAHVIIESADNFTPPTSEVIEEHDSTPQLLLFSANTQDSLEAMIQRNLAYLRENTDSLRDLVYTMGARREHLSFRAASIVHSDMSVTTASFGKAPSSPPDIVMVFAGQGAQWPGMGVELFKSNATFRRSILEMDSVLQSLPDAPAWSIADEISKEHQTSMLYLSSYSQPICTALQVALVNTLFELNIRPYAVIGHSSGELAAAYAAGRLTASQAVTLAYYRGIVAGKVAQAGYYPFLRPGVVVACENSPSSVTISGDIDQVQYVMQEISLAHPEILCRQIKSDTAYHSHHMKSVGDTYHSFINPFFRGETEVNCQPVHFFSTVTGDELSDGDHVGPKYWQQNLESRVLFQGALENIISRQRSRHLLFLDVSPHSTLAGPIRQTLEQAEVAHPYVPCLIRFKNCAESFLSTIGQLYSHRQPLDFNMLTNPDRTAKVLTDVPTYPWQHGYSNLYTTRQNNEWLFRKQPKHELLGTRVVDSTDNEPCWRNVLYLEHVTWLRDHKVSGNIVFPAAGYVMMAGEAVRQIGSTASGFIVRQMVLDTAMVLNQSNPTEIVTSLRKHRRDRWYSFTISSHNGVKWIEHCYGEVAQENLSRDINVSNWYKTLSRGGVEFGPAFQCVESQSCSVTSNTVSGRIVSKLDSVLHIVYGAIYKGFDWQVESLPVPTSIGEIMIGECVSDLDVTMWADVSRNSNILVNGEAFGSDGCLLIRIKDIVLRPLGANQACFEEDESHAGARLLWKPSMQFLNLADLIQTPVNWTKQTMLLNDFTSLCIERALCLLHAQGDWLQRQPKPSSEQSMESLVEKILATSAAPCARAMIKVLDNIVPICKGEIDALEVLMGDDTLYELYNYLNEPQQRILEIGAGTGGTTAKILPRTKYSTYTFTDISAAFFPAAKDRFQCHANVVYRTLDITKDPLDQANVLHATPNLYETLSNLLLEELCGDAKFTNFIVGVLPGWWAGESDGRADEPYISPDRWDSILKAAAPPLHSLAFMLASPSCVPESPLKRNVTLLSDVTSSEIAVRMQKQLLSRGYSVGVQSLDQSLMDGEDVIILVDTVSPFFHNLDSRKLSTFQNLLRELQRSHSGALWVTRSIQIDCRDPRYSPTLGVARTVRSEFGLDFGTCEVDTLKYTSIGLVIDVFEAFHGRRHGQNAYPEYEYAIREDTADAGQQVQLLGDDEVELQVDTAGVNFLTVLINSASDGVGLAAIQISKMIGATIYATVIGEDKVEYLTASHGIPRDHIFNSRDSSFLDGIMRVTNGRGVDLVLTSLSADFIQASCDCVANFGKLVNLSKPTAANQGQFPIDSFHPNMSYASVDIIDYIKRRPKESKRLLEEIVELYKQGHIQPITPVKTFTATDIRQCFDYMQSGQHIGQLRLSLKSQDTFIEAVCSPKTMIFQSDASYLLVGGLGGLGAEIARWMAEHGARNLIFLSRSADAESNIRLFRELESQGCSVQAIKGSVCNASDVKRAISAARIKLKGIFNMSMVLQDASLLKMSSDEWNAATGPKIQGTWNLHDASLDQDLDFFLLFSSMGGILGIPGQANYASANTFMDAFVQFRHSSHLPASVIDIGEVQGIGHVANNPEILNRLKLLECARMSQKDLFHAITIAISHSLPPQTLDYSRYENPAQFITGLRDTTGMLDSTGGKSMLLDSRLAAYVGNSAAVTAPTETKTSANKLNNFVSSAATDSAILSEPSATQFVSLEIARWVFDLLMKPVDDDSEIDLSRSLVDVGLDSLAAVEMRSWLKSSLGLDISVLEIMASPSLAAMGEHVIRELVRKFGGDNKN.

The region spanning 1-417 (MAICGIAVRL…GVNAHVIIES (417 aa)) is the Ketosynthase family 3 (KS3) domain. Residues Cys170, His306, and His340 each act as for beta-ketoacyl synthase activity in the active site. The malonyl-CoA:ACP transacylase (MAT) domain stretch occupies residues 513 to 809 (VFAGQGAQWP…HPYVPCLIRF (297 aa)). Residues 877-1001 (HELLGTRVVD…GEVAQENLSR (125 aa)) are N-terminal hotdog fold. The dehydratase (DH) domain stretch occupies residues 877-1128 (HELLGTRVVD…DIVLRPLGAN (252 aa)). The PKS/mFAS DH domain occupies 877–1202 (HELLGTRVVD…LQRQPKPSSE (326 aa)). The active-site Proton acceptor; for dehydratase activity is the His909. The C-terminal hotdog fold stretch occupies residues 1032–1202 (SVTSNTVSGR…LQRQPKPSSE (171 aa)). Asp1093 functions as the Proton donor; for dehydratase activity in the catalytic mechanism. The interval 1256 to 1390 (NYLNEPQQRI…DRWDSILKAA (135 aa)) is methyltransferase (CMet) domain. Positions 1575-1783 (GQQVQLLGDD…SGQHIGQLRL (209 aa)) are enoyl reductase (ER) domain. Residues 1807–1981 (ASYLLVGGLG…ASVIDIGEVQ (175 aa)) are ketoreductase (KR) domain. The region spanning 2102–2183 (PSATQFVSLE…AMGEHVIREL (82 aa)) is the Carrier domain. Ser2143 is modified (O-(pantetheine 4'-phosphoryl)serine).

Its function is as follows. Highly reducing polyketide synthase; part of the gene cluster that mediates the biosynthesis of viriditoxin, one of the 'classical' secondary metabolites produced by fungi and that has antibacterial activity. The first step is performed by the polyketide synthase VdtA which condenses one acetyl-CoA and 6 malonyl-CoA units to form the heptaketide monomer backbone of viriditoxin. The product of VdtA is then O-methylated on C7 by the O-methyltransferase VdtC. The O-methyl group is important for the stereoselective coupling of the monomers at the final step of viriditoxin biosynthesis. The short-chain dehydrogenase/reductase VdtF is involved in the reduction of the C3-C4 double bond. The FAD-binding monooxygenase VdtE then converts the ketone group into a methyl-ester group to yield semi-viriditoxin. Finally, the laccase VdtB is involved in dimerization of 2 semi-viriditoxin molecules to yield the final viriditoxin. The non-catalytic carboxylesterase-like protein VdtD affects the stereochemistical outcome of the coupling. The highly reducing polyketide synthase VdtX is not involved in viriditoxin synthesis, but might possibly play a role in the production of additional metabolites not identified yet. The sequence is that of Highly reducing polyketide synthase VdtX from Byssochlamys spectabilis (Paecilomyces variotii).